The sequence spans 354 residues: UDP-3-O-acylglucosamine N-acyltransferase (354 aa).

H257 (proton acceptor) is an active-site residue.

The protein belongs to the transferase hexapeptide repeat family. LpxD subfamily. As to quaternary structure, homotrimer.

It carries out the reaction a UDP-3-O-[(3R)-3-hydroxyacyl]-alpha-D-glucosamine + a (3R)-hydroxyacyl-[ACP] = a UDP-2-N,3-O-bis[(3R)-3-hydroxyacyl]-alpha-D-glucosamine + holo-[ACP] + H(+). Its pathway is bacterial outer membrane biogenesis; LPS lipid A biosynthesis. In terms of biological role, catalyzes the N-acylation of UDP-3-O-acylglucosamine using 3-hydroxyacyl-ACP as the acyl donor. Is involved in the biosynthesis of lipid A, a phosphorylated glycolipid that anchors the lipopolysaccharide to the outer membrane of the cell. This is UDP-3-O-acylglucosamine N-acyltransferase from Rhizobium johnstonii (strain DSM 114642 / LMG 32736 / 3841) (Rhizobium leguminosarum bv. viciae).